A 567-amino-acid polypeptide reads, in one-letter code: Hexose transporter HXT11 (567 aa).

Residues 1 to 22 (MSGVNNTSANELSTTMSNSNSA) are compositionally biased toward polar residues. The tract at residues 1–45 (MSGVNNTSANELSTTMSNSNSAVGAPSVKTEHGDSKNSLNLDANE) is disordered. The Cytoplasmic segment spans residues 1–56 (MSGVNNTSANELSTTMSNSNSAVGAPSVKTEHGDSKNSLNLDANEPPIDLPQKPLS). A helical membrane pass occupies residues 57–77 (AYTTVAILCLMIAFGGFIFGW). Over 78-112 (DTGTISGFVNLSDFIRRFGQKNDKGTYYLSKVRMG) the chain is Extracellular. N-linked (GlcNAc...) asparagine glycosylation occurs at Asn87. Residues 113–133 (LIVSIFNIGCAIGGIVLSKVG) traverse the membrane as a helical segment. Topologically, residues 134–139 (DIYGRR) are cytoplasmic. The helical transmembrane segment at 140-160 (IGLITVTAIYVVGILIQITSI) threads the bilayer. The Extracellular segment spans residues 161-170 (NKWYQYFIGR). A helical transmembrane segment spans residues 171–191 (IISGLGVGGIAVLSPMLISEV). Over 192–197 (APKHIR) the chain is Cytoplasmic. The chain crosses the membrane as a helical span at residues 198-218 (GTLVQLYQLMGTMGIFLGYCT). Residues 219 to 232 (NYGTKNYHNATQWR) lie on the Extracellular side of the membrane. The N-linked (GlcNAc...) asparagine glycan is linked to Asn227. Residues 233 to 253 (VGLGLCFAWATFMVSGMMFVP) traverse the membrane as a helical segment. At 254-336 (ESPRYLIEVG…IQSLQQLTGD (83 aa)) the chain is on the cytoplasmic side. Residues 337-353 (NYFFYYGTTIFKSVGLK) traverse the membrane as a helical segment. Residues 354 to 359 (DSFQTS) are Extracellular-facing. Residues 360-377 (IIIGVVNFFSSFIAVYTI) form a helical membrane-spanning segment. Over 378-384 (ERFGRRT) the chain is Cytoplasmic. A helical membrane pass occupies residues 385 to 405 (CLLWGAASMLCCFAVFASVGV). Over 406–429 (TKLWPQGSSHQDITSQGAGNCMIV) the chain is Extracellular. The chain crosses the membrane as a helical span at residues 430 to 450 (FTMFFIFSFATTWAGGCYVIV). At 451–467 (SETFPLRVKSRGMAIAT) the chain is on the cytoplasmic side. The chain crosses the membrane as a helical span at residues 468–488 (AANWMWGFLISFFTPFITGAI). A topological domain (extracellular) is located at residue Asn489. Residues 490-510 (FYYGYVFLGCLVFAYFYVFFF) form a helical membrane-spanning segment. The Cytoplasmic portion of the chain corresponds to 511–567 (VPETKGLTLEEVNTMWLEGVPAWKSASWVPPERRTADYDADAIDHDNRPIYKRFFSS).

The protein belongs to the major facilitator superfamily. Sugar transporter (TC 2.A.1.1) family.

It is found in the membrane. Its function is as follows. Probable glucose transporter. In Saccharomyces cerevisiae (strain ATCC 204508 / S288c) (Baker's yeast), this protein is Hexose transporter HXT11 (HXT11).